A 107-amino-acid chain; its full sequence is MILMFDMPTDTAEERKAYRKFRKFLLSEGFIMHQFSVYSKLLLNNSANTAMIARLKENNPKKGNITLLTVTEKQFARMIYLNGERDTSIANSDSRLVFLGEAFPDET.

Residue aspartate 6 participates in Mg(2+) binding.

This sequence belongs to the CRISPR-associated endoribonuclease Cas2 protein family. As to quaternary structure, homodimer, forms a heterotetramer with a Cas1 homodimer. It depends on Mg(2+) as a cofactor.

In terms of biological role, CRISPR (clustered regularly interspaced short palindromic repeat), is an adaptive immune system that provides protection against mobile genetic elements (viruses, transposable elements and conjugative plasmids). CRISPR clusters contain sequences complementary to antecedent mobile elements and target invading nucleic acids. CRISPR clusters are transcribed and processed into CRISPR RNA (crRNA). Functions as a ssRNA-specific endoribonuclease. Involved in the integration of spacer DNA into the CRISPR cassette. This Streptococcus mutans serotype c (strain NN2025) protein is CRISPR-associated endoribonuclease Cas2.